The chain runs to 308 residues: Methionyl-tRNA formyltransferase (308 aa).

107 to 110 (SLLP) serves as a coordination point for (6S)-5,6,7,8-tetrahydrofolate.

This sequence belongs to the Fmt family.

It carries out the reaction L-methionyl-tRNA(fMet) + (6R)-10-formyltetrahydrofolate = N-formyl-L-methionyl-tRNA(fMet) + (6S)-5,6,7,8-tetrahydrofolate + H(+). Attaches a formyl group to the free amino group of methionyl-tRNA(fMet). The formyl group appears to play a dual role in the initiator identity of N-formylmethionyl-tRNA by promoting its recognition by IF2 and preventing the misappropriation of this tRNA by the elongation apparatus. This chain is Methionyl-tRNA formyltransferase, found in Carboxydothermus hydrogenoformans (strain ATCC BAA-161 / DSM 6008 / Z-2901).